We begin with the raw amino-acid sequence, 159 residues long: Nascent polypeptide-associated complex subunit beta (159 aa).

2 disordered regions span residues 1 to 39 (MDME…GMDD) and 121 to 159 (ESYQ…DKVE). Basic residues predominate over residues 23–32 (TPRRKVKNVH). An NAC-A/B domain is found at 36-101 (GMDDKKLQTS…GEDKELTELV (66 aa)). Over residues 136–153 (KDDDEDDDDIPDLVEGEN) the composition is skewed to acidic residues.

Belongs to the NAC-beta family. In terms of assembly, part of the nascent polypeptide-associated complex (NAC), consisting of EGD2 and EGD1. NAC associates with ribosomes via EGD1.

The protein localises to the cytoplasm. The protein resides in the nucleus. Its function is as follows. Component of the nascent polypeptide-associated complex (NAC), a dynamic component of the ribosomal exit tunnel, protecting the emerging polypeptides from interaction with other cytoplasmic proteins to ensure appropriate nascent protein targeting. The NAC complex also promotes mitochondrial protein import by enhancing productive ribosome interactions with the outer mitochondrial membrane and blocks the inappropriate interaction of ribosomes translating non-secretory nascent polypeptides with translocation sites in the membrane of the endoplasmic reticulum. EGD1 may act as a transcription factor that exert a negative effect on the expression of several genes that are transcribed by RNA polymerase II. The chain is Nascent polypeptide-associated complex subunit beta (egd1) from Botryotinia fuckeliana (strain B05.10) (Noble rot fungus).